A 382-amino-acid chain; its full sequence is MIOREX complex component 5 (382 aa).

Residues 1–12 constitute a mitochondrion transit peptide; that stretch reads MRRTFSQLATRL.

As to quaternary structure, associates with the mitochondrial ribosome.

The protein resides in the mitochondrion. Functionally, component of MIOREX complexes, large expressome-like assemblies of ribosomes with factors involved in all the steps of post-transcriptional gene expression. This chain is MIOREX complex component 5, found in Saccharomyces cerevisiae (strain ATCC 204508 / S288c) (Baker's yeast).